The following is a 1526-amino-acid chain: Cell wall protein IFF4 (1526 aa).

The first 20 residues, 1-20 (MKFLQKFIITVALLTNIVFA), serve as a signal peptide directing secretion. N-linked (GlcNAc...) asparagine glycosylation is found at N93 and N498. The tract at residues 512–541 (SSAGGSSFPEETHMLQTSDSDLSSTAGSES) is disordered. The span at 525 to 541 (MLQTSDSDLSSTAGSES) shows a compositional bias: polar residues. A glycan (N-linked (GlcNAc...) asparagine) is linked at N637. A disordered region spans residues 1180–1207 (WNGAKSDSPHTSESDITSQYNSHSTSVA). Residues 1193 to 1207 (SDITSQYNSHSTSVA) show a composition bias toward polar residues. N1451, N1463, N1479, N1502, and N1506 each carry an N-linked (GlcNAc...) asparagine glycan. Residues 1455-1483 (SSVSGYPTNRSDSNGYANTPTTGSNTSGD) form a disordered region. Residue N1502 is the site of GPI-anchor amidated asparagine attachment. Residues 1503 to 1526 (GSTNISNKYLKFLGTVVSILILLI) constitute a propeptide, removed in mature form.

The protein belongs to the HYR1/IFF family. In terms of processing, the GPI-anchor is attached to the protein in the endoplasmic reticulum and serves to target the protein to the cell surface. There, the glucosamine-inositol phospholipid moiety is cleaved off and the GPI-$modified mannoprotein is covalently attached via its lipidless GPI glycan remnant to the 1,6-beta-glucan of the outer cell wall layer.

It is found in the secreted. The protein resides in the cell wall. Its subcellular location is the membrane. Its function is as follows. GPI-anchored cell wall protein involved in cell wall organization, hyphal growth, as well as in host-fungal interaction and virulence. Plays a role in adherence to plastic and to host epithelial cells. Promotes the tissue fungal burden during murine vaginal candidiasis. Also increases susceptibility to neutrophil-mediated killing. Furthermore, contributes to the severity of hematogenously disseminated candidiasis in normal mice, but not in neutropenic mice. The protein is Cell wall protein IFF4 (IFF4) of Candida albicans (strain SC5314 / ATCC MYA-2876) (Yeast).